We begin with the raw amino-acid sequence, 424 residues long: Tyrosine--tRNA ligase (424 aa).

Tyr37 is an L-tyrosine binding site. The short motif at 42 to 51 (PTADSLHIGS) is the 'HIGH' region element. L-tyrosine is bound by residues Tyr174 and Gln178. The 'KMSKS' region signature appears at 234–238 (KFGKT). Residue Lys237 coordinates ATP. The region spanning 357–422 (SGLIDALAAG…RGKKLYALVD (66 aa)) is the S4 RNA-binding domain.

The protein belongs to the class-I aminoacyl-tRNA synthetase family. TyrS type 1 subfamily. In terms of assembly, homodimer.

It localises to the cytoplasm. It carries out the reaction tRNA(Tyr) + L-tyrosine + ATP = L-tyrosyl-tRNA(Tyr) + AMP + diphosphate + H(+). Functionally, catalyzes the attachment of tyrosine to tRNA(Tyr) in a two-step reaction: tyrosine is first activated by ATP to form Tyr-AMP and then transferred to the acceptor end of tRNA(Tyr). This is Tyrosine--tRNA ligase from Chromobacterium violaceum (strain ATCC 12472 / DSM 30191 / JCM 1249 / CCUG 213 / NBRC 12614 / NCIMB 9131 / NCTC 9757 / MK).